The sequence spans 462 residues: MEKKFFLSFLFLLPFFMILVIAESEEENPDDLIQLGVTRNKIMTAQYECYQKIMQDPVQQTEGIYCNRTWDGWLCWNDVAAGTESMQHCPDYFQDFDPSEKVTKICDQDGNWFRHPASNRTWTNYTQCNVNTHEKVKTALNLFYLTIIGHVLSIASLLISLGIFFYFKSLSCQRITLHKNLFFSFVCNSVITIIHLTAVANNQALVATNPVSCKVSQFIHLYLMGCNYFWMLCEGIYLHTLVVVAVFAEKQHLMWYYFLGWGFPLIPACIHAVARRLYYNDNCWISSDTQLLYIIHGPICAALLVNLFFLLNIVRVLITKLKVTHQAESNLYMKAVRATLILVPLLGIEFVLIPWRPEGKIAEEIYDYIINILMHYQGLLVSTIFCFFNGEVQAILRRNWNQYKIQFGNNFSHSDTLRSASYTVSTISDGTGYSHDCLSEHLNGKSIHDTDNVVIKPEKLYD.

The signal sequence occupies residues 1-22 (MEKKFFLSFLFLLPFFMILVIA). Topologically, residues 23–140 (ESEEENPDDL…NTHEKVKTAL (118 aa)) are extracellular. 3 disulfide bridges follow: Cys-49–Cys-75, Cys-66–Cys-106, and Cys-89–Cys-128. 3 N-linked (GlcNAc...) asparagine glycosylation sites follow: Asn-67, Asn-119, and Asn-124. Residues 141–165 (NLFYLTIIGHVLSIASLLISLGIFF) traverse the membrane as a helical segment. Topologically, residues 166–176 (YFKSLSCQRIT) are cytoplasmic. Residues 177 to 199 (LHKNLFFSFVCNSVITIIHLTAV) traverse the membrane as a helical segment. Residues 200–210 (ANNQALVATNP) lie on the Extracellular side of the membrane. A helical transmembrane segment spans residues 211–239 (VSCKVSQFIHLYLMGCNYFWMLCEGIYLH). Over 240-253 (TLVVVAVFAEKQHL) the chain is Cytoplasmic. A helical membrane pass occupies residues 254–274 (MWYYFLGWGFPLIPACIHAVA). Residues 275 to 290 (RRLYYNDNCWISSDTQ) lie on the Extracellular side of the membrane. A required for RAMP3 interaction region spans residues 289 to 290 (TQ). A helical membrane pass occupies residues 291–315 (LLYIIHGPICAALLVNLFFLLNIVR). Residues 316 to 330 (VLITKLKVTHQAESN) are Cytoplasmic-facing. Residues 331–352 (LYMKAVRATLILVPLLGIEFVL) traverse the membrane as a helical segment. At 353 to 367 (IPWRPEGKIAEEIYD) the chain is on the extracellular side. The helical transmembrane segment at 368 to 388 (YIINILMHYQGLLVSTIFCFF) threads the bilayer. Residues 389–462 (NGEVQAILRR…VVIKPEKLYD (74 aa)) are Cytoplasmic-facing. Residues Ser-421 and Ser-446 each carry the phosphoserine modification.

Belongs to the G-protein coupled receptor 2 family. As to quaternary structure, heterodimer of CALCRL and RAMP1; the receptor complex functions as CGRP receptor. Heterodimer of CALCRL and RAMP2 or CALCRL and RAMP3; the complexes function as adrenomedullin receptor.

Its subcellular location is the cell membrane. G protein-coupled receptor which specificity is determined by its interaction with receptor-activity-modifying proteins (RAMPs). Together with RAMP1, form the receptor complex for calcitonin-gene-related peptides CALCA/CGRP1 and CALCB/CGRP2. Together with RAMP2 or RAMP3, function as receptor complexes for adrenomedullin (ADM and ADM2). Ligand binding causes a conformation change that triggers signaling via guanine nucleotide-binding proteins (G proteins) and modulates the activity of downstream effectors. Activates cAMP-dependent pathway. The sequence is that of Calcitonin gene-related peptide type 1 receptor (CALCRL) from Bos taurus (Bovine).